The sequence spans 676 residues: Protein timeless (676 aa).

Residues 77–108 (VNTLQKLLNLWFEASLSESSEDNESNTSPPKK) are necessary for normal circadian rhythm. 2 disordered regions span residues 94–145 (ESSE…CDER) and 346–398 (PESI…LVKR). Low complexity-rich tracts occupy residues 101-129 (SNTS…SDNG) and 360-369 (QGKPQHQKPP). The Nuclear localization signal signature appears at 388-398 (KELRRKKLVKR).

Belongs to the timeless family. As to quaternary structure, forms a heterodimer with period (PER); the complex then translocates into the nucleus. In terms of processing, phosphorylated with a circadian rhythmicity.

It localises to the nucleus. The protein resides in the cytoplasm. Its subcellular location is the perinuclear region. Required for the production of circadian rhythms. The biological cycle depends on the rhythmic formation and nuclear localization of the TIM-PER complex. Light induces the degradation of TIM, which promotes elimination of PER. Nuclear activity of the heterodimer coordinatively regulates PER and TIM transcription through a negative feedback loop. Behaves as a negative element in circadian transcriptional loop. Does not appear to bind DNA, suggesting indirect transcriptional inhibition. In Drosophila hydei (Fruit fly), this protein is Protein timeless (tim).